Reading from the N-terminus, the 328-residue chain is Reticulocalbin-3 (328 aa).

The signal sequence occupies residues methionine 1 to glycine 20. Residues glutamine 19–histidine 49 form a disordered region. 6 consecutive EF-hand domains span residues glutamate 75–arginine 112, histidine 113–proline 148, lysine 163–proline 198, methionine 200–glycine 235, tryptophan 241–aspartate 276, and glutamine 277–serine 312. Residues aspartate 92, aspartate 94, tryptophan 96, glutamate 101, aspartate 126, aspartate 128, aspartate 130, arginine 132, and glutamate 137 each contribute to the Ca(2+) site. Asparagine 140 carries an N-linked (GlcNAc...) asparagine glycan. Ca(2+) is bound by residues aspartate 176, aspartate 178, aspartate 180, methionine 182, glutamate 187, aspartate 213, asparagine 215, aspartate 217, tyrosine 219, glutamate 224, aspartate 254, asparagine 256, aspartate 258, histidine 260, glutamate 265, aspartate 290, aspartate 292, aspartate 294, arginine 296, and glutamate 301. The Prevents secretion from ER signature appears at histidine 325–leucine 328.

The protein belongs to the CREC family. In terms of assembly, interacts with PCSK6 (immature form including the propeptide); probably involved in the maturation and the secretion of PCSK6. Post-translationally, degraded by PCSK6 and other endoproteases including FURIN and PCSK5. N-glycosylated. Widely expressed.

It localises to the endoplasmic reticulum lumen. Functionally, probable molecular chaperone assisting protein biosynthesis and transport in the endoplasmic reticulum. Required for the proper biosynthesis and transport of pulmonary surfactant-associated protein A/SP-A, pulmonary surfactant-associated protein D/SP-D and the lipid transporter ABCA3. By regulating both the proper expression and the degradation through the endoplasmic reticulum-associated protein degradation pathway of these proteins plays a crucial role in pulmonary surfactant homeostasis. Has an anti-fibrotic activity by negatively regulating the secretion of type I and type III collagens. This calcium-binding protein also transiently associates with immature PCSK6 and regulates its secretion. This is Reticulocalbin-3 from Homo sapiens (Human).